We begin with the raw amino-acid sequence, 1300 residues long: Serine protease EspP (1300 aa).

A signal peptide spans 1–55 (MNKIYSLKYSHITGGLIAVSELSGRVSSRATGKKKHKRILALCFLGLLQSSYSFA). A Peptidase S6 domain is found at 57–311 (QMDISNFYIR…NQTTIDNLKN (255 aa)). Catalysis depends on charge relay system residues histidine 127, aspartate 156, and serine 263. The Autotransporter domain maps to 1034-1300 (DINGEAGAWA…AVNANFRYSF (267 aa)).

Post-translationally, cleaved to release the mature protein from the outer membrane.

It is found in the periplasm. The protein localises to the secreted. The protein resides in the cell surface. It localises to the cell outer membrane. Its activity is regulated as follows. Inhibition of cytotoxic activity by phenylmethylsulfonyl fluoride. In terms of biological role, serine protease capable of cleaving pepsin A and human coagulation factor V, which may contribute to the mucosal hemorrhage observed in hemorrhagic colitis. This chain is Serine protease EspP (espP), found in Escherichia coli O157:H7.